Here is a 271-residue protein sequence, read N- to C-terminus: uncharacterized protein (271 aa).

The disordered stretch occupies residues 1 to 20 (MPDLHTLPAGSRPERAIRNN).

This sequence belongs to the PEP2 family.

This is an uncharacterized protein from Aspergillus terreus (strain NIH 2624 / FGSC A1156).